The primary structure comprises 485 residues: MIARTKIICTIGPATNTPEMLEKLLDAGMNVARLNFSHGTHESHGRTIAILKELREKRQVPLAIMLDTKGPEIRLGQVESPIKVQPGDRLTLVSKEILGSKESGVTLYPSCVFPYVRERAPVLIDDGYIQAVVVNAQEHMVEIEFQNSGEIKSNKSLSIKDIDVALPFMTEKDIADLKFGVEQELDLIAASFVRCNEDIDSMRKVLESFGRPNMPIIAKIENHLGVQNFQEIARAADGIMIARGDLGIELSIVEVPGLQKFMARASRETGRFCITATQMLESMIRNPLPTRAEVSDVANAIYDGTSAVMLSGETASGAHPVHAVKTMRSIIQETEKTFDYHAFFQLNDKNSALKVSPYLEAIGFSGIQIAEKASAKAIIVYTQTGGSPMFLSKYRPYLPIIAVTPNRNVYYRLAVEWGVYPMLTLESNRTVWRHQACVYGVEKGILSNYDKILVFSRGAGMQDTNNLTLTTVHDALSPSLDEIVP.

R33 is a substrate binding site. K(+) is bound by residues N35, S37, D67, and T68. 35 to 38 lines the ATP pocket; the sequence is NFSH. The ATP site is built by R74 and K155. E221 contacts Mg(2+). Residues G244, D245, and T277 each contribute to the substrate site. Residue D245 coordinates Mg(2+).

The protein belongs to the pyruvate kinase family. As to quaternary structure, homotetramer. Mg(2+) is required as a cofactor. K(+) serves as cofactor.

It carries out the reaction pyruvate + ATP = phosphoenolpyruvate + ADP + H(+). The protein operates within carbohydrate degradation; glycolysis; pyruvate from D-glyceraldehyde 3-phosphate: step 5/5. The sequence is that of Pyruvate kinase (pyk) from Chlamydia trachomatis serovar L2 (strain ATCC VR-902B / DSM 19102 / 434/Bu).